The following is a 310-amino-acid chain: Ribosomal RNA small subunit methyltransferase H (310 aa).

Residues 33–35 (GGH), Asp-52, Phe-79, Asp-98, and Gln-105 each bind S-adenosyl-L-methionine.

The protein belongs to the methyltransferase superfamily. RsmH family.

The protein localises to the cytoplasm. The catalysed reaction is cytidine(1402) in 16S rRNA + S-adenosyl-L-methionine = N(4)-methylcytidine(1402) in 16S rRNA + S-adenosyl-L-homocysteine + H(+). Specifically methylates the N4 position of cytidine in position 1402 (C1402) of 16S rRNA. This chain is Ribosomal RNA small subunit methyltransferase H, found in Campylobacter jejuni subsp. jejuni serotype O:23/36 (strain 81-176).